The sequence spans 187 residues: UPF0301 protein BCI_0481 (187 aa).

It belongs to the UPF0301 (AlgH) family.

This chain is UPF0301 protein BCI_0481, found in Baumannia cicadellinicola subsp. Homalodisca coagulata.